The chain runs to 284 residues: Four and a half LIM domains protein 5 (284 aa).

The C4-type zinc-finger motif lies at 8–32 (CQYCTASLLGKKYVLKDDSLFCVTC). LIM zinc-binding domains are found at residues 39–100 (NYCE…ECSS), 101–160 (KCFH…KEFA), 161–220 (HYCN…LYAN), and 223–283 (VACS…MDSD).

Interacts with CREM (via the third LIM domain). Interacts (via second LIM domain) with SPAG8.

The protein resides in the nucleus. Its function is as follows. May be involved in the regulation of spermatogenesis. Stimulates CREM transcriptional activity in a phosphorylation-independent manner. The chain is Four and a half LIM domains protein 5 (FHL5) from Macaca fascicularis (Crab-eating macaque).